Reading from the N-terminus, the 525-residue chain is Exoglucanase 1 (525 aa).

Residues 1 to 18 (MRTAKFATLAALVASAAA) form the signal peptide. Residues 19–467 (QQACSLTTER…AGNGGNNGGN (449 aa)) form a catalytic region. Residue E231 is the Nucleophile of the active site. E236 acts as the Proton donor in catalysis. N289 is a glycosylation site (N-linked (GlcNAc...) asparagine). The interval 454–492 (GLPGAGNGGNNGGNPPPPTTTTSSAPATTTTASAGPKAG) is disordered. Over residues 456 to 465 (PGAGNGGNNG) the composition is skewed to gly residues. The linker stretch occupies residues 468-489 (PPPPTTTTSSAPATTTTASAGP). Over residues 473 to 489 (TTTSSAPATTTTASAGP) the composition is skewed to low complexity. The 37-residue stretch at 489-525 (PKAGRWQQCGGIGFTGPTQCEEPYICTKLNDWYSQCL) folds into the CBM1 domain. Intrachain disulfides connect C497/C514 and C508/C524.

It belongs to the glycosyl hydrolase 7 (cellulase C) family.

It catalyses the reaction Hydrolysis of (1-&gt;4)-beta-D-glucosidic linkages in cellulose and cellotetraose, releasing cellobiose from the non-reducing ends of the chains.. Its function is as follows. The biological conversion of cellulose to glucose generally requires three types of hydrolytic enzymes: (1) Endoglucanases which cut internal beta-1,4-glucosidic bonds; (2) Exocellobiohydrolases that cut the disaccharide cellobiose from the non-reducing end of the cellulose polymer chain; (3) Beta-1,4-glucosidases which hydrolyze the cellobiose and other short cello-oligosaccharides to glucose. The polypeptide is Exoglucanase 1 (CBH-1) (Humicola insolens (Soft-rot fungus)).